The primary structure comprises 412 residues: BSD domain-containing protein 1 (412 aa).

The BSD domain occupies 146 to 198 (WLAYWDPEHRKAEISELLVTSPSIRALYTKMVPAAVSHSEFWQRYFYKVHQLE). Basic and acidic residues-rich tracts occupy residues 208–219 (KQRADQSVHSEE) and 255–271 (HVED…RDHT). 2 disordered regions span residues 208 to 228 (KQRA…EEED) and 255 to 383 (HVED…EKDF). The span at 272–287 (SITSPSESSESISPIT) shows a compositional bias: low complexity. The segment covering 340 to 351 (THREDPPSDLRV) has biased composition (basic and acidic residues). Positions 355 to 374 (NSDSGKSTPSNNGQKGSSTD) are enriched in polar residues.

In Xenopus tropicalis (Western clawed frog), this protein is BSD domain-containing protein 1 (bsdc1).